Here is a 185-residue protein sequence, read N- to C-terminus: Neuronal vesicle trafficking-associated protein 1 (185 aa).

The Cytoplasmic segment spans residues 1–82 (MVKLGNNFAE…ITEGVTERFK (82 aa)). The helical; Signal-anchor for type II membrane protein transmembrane segment at 83–103 (VSVLVLFALAFLTCVVFLVVY) threads the bilayer. Over 104–185 (KVYKYDRACP…QETEAAEKSA (82 aa)) the chain is Lumenal. Residues 129–164 (ESYYTEQDSSAREKFYTVINHYNVAKQSITRSVSPW) form a required for GRIP1 interaction region.

It belongs to the NSG family. As to quaternary structure, forms a complex with GRIP1, GRIA2 and STX12 through direct interaction with GRIP1; controls the intracellular fate of AMPAR and the endosomal sorting of the GRIA2 subunit toward recycling and membrane targeting. Interacts with STX12. Interacts with APP; could regulate APP processing. Interacts with FAM171A1. As to expression, pituitary and less in adrenal gland and testis. Expressed in the hippocampus throughout development. At P0, highly and broadly expressed throughout the cortical plate, but is down-regulated overall at P8 and P14, but remains relatively enriched in layer V. At P0 is expressed ubiquitously in the developing cerebellum namely Purkinje neurons as well as granule neurons. However, it becomes restricted to Purkinje cells by P8. This exclusive expression in Purkinje cells is maintained throughout adulthood.

The protein localises to the membrane. The protein resides in the golgi apparatus. Its subcellular location is the trans-Golgi network membrane. It localises to the endosome membrane. It is found in the cell projection. The protein localises to the dendrite. The protein resides in the early endosome membrane. Its subcellular location is the late endosome membrane. It localises to the lysosome lumen. It is found in the recycling endosome membrane. The protein localises to the cytoplasmic vesicle membrane. The protein resides in the golgi stack membrane. Its subcellular location is the endosome. It localises to the multivesicular body membrane. It is found in the endoplasmic reticulum membrane. In terms of biological role, plays a role in the recycling mechanism in neurons of multiple receptors, including AMPAR, APP and L1CAM and acts at the level of early endosomes to promote sorting of receptors toward a recycling pathway. Regulates sorting and recycling of GRIA2 through interaction with GRIP1 and then contributes to the regulation of synaptic transmission and plasticity by affecting the recycling and targeting of AMPA receptors to the synapse. Is required for faithful sorting of L1CAM to axons by facilitating trafficking from somatodendritic early endosome or the recycling endosome. In an other hand, induces apoptosis via the activation of CASP3 in response to DNA damage. In Mus musculus (Mouse), this protein is Neuronal vesicle trafficking-associated protein 1.